We begin with the raw amino-acid sequence, 334 residues long: Holliday junction branch migration complex subunit RuvB (334 aa).

The tract at residues 4-184 (ADRLIAADAQ…FGIVQRLEFY (181 aa)) is large ATPase domain (RuvB-L). ATP-binding positions include isoleucine 23, arginine 24, glycine 65, lysine 68, threonine 69, threonine 70, 131–133 (EDY), arginine 174, tyrosine 184, and arginine 221. Threonine 69 contacts Mg(2+). A small ATPAse domain (RuvB-S) region spans residues 185 to 255 (QVADLQHIVG…VAAQALNMLD (71 aa)). Residues 258–334 (AAGFDYMDRK…YQHFGIDRAE (77 aa)) are head domain (RuvB-H). DNA-binding residues include arginine 294, arginine 313, and arginine 318.

This sequence belongs to the RuvB family. In terms of assembly, homohexamer. Forms an RuvA(8)-RuvB(12)-Holliday junction (HJ) complex. HJ DNA is sandwiched between 2 RuvA tetramers; dsDNA enters through RuvA and exits via RuvB. An RuvB hexamer assembles on each DNA strand where it exits the tetramer. Each RuvB hexamer is contacted by two RuvA subunits (via domain III) on 2 adjacent RuvB subunits; this complex drives branch migration. In the full resolvosome a probable DNA-RuvA(4)-RuvB(12)-RuvC(2) complex forms which resolves the HJ.

Its subcellular location is the cytoplasm. It carries out the reaction ATP + H2O = ADP + phosphate + H(+). In terms of biological role, the RuvA-RuvB-RuvC complex processes Holliday junction (HJ) DNA during genetic recombination and DNA repair, while the RuvA-RuvB complex plays an important role in the rescue of blocked DNA replication forks via replication fork reversal (RFR). RuvA specifically binds to HJ cruciform DNA, conferring on it an open structure. The RuvB hexamer acts as an ATP-dependent pump, pulling dsDNA into and through the RuvAB complex. RuvB forms 2 homohexamers on either side of HJ DNA bound by 1 or 2 RuvA tetramers; 4 subunits per hexamer contact DNA at a time. Coordinated motions by a converter formed by DNA-disengaged RuvB subunits stimulates ATP hydrolysis and nucleotide exchange. Immobilization of the converter enables RuvB to convert the ATP-contained energy into a lever motion, pulling 2 nucleotides of DNA out of the RuvA tetramer per ATP hydrolyzed, thus driving DNA branch migration. The RuvB motors rotate together with the DNA substrate, which together with the progressing nucleotide cycle form the mechanistic basis for DNA recombination by continuous HJ branch migration. Branch migration allows RuvC to scan DNA until it finds its consensus sequence, where it cleaves and resolves cruciform DNA. In Edwardsiella ictaluri (strain 93-146), this protein is Holliday junction branch migration complex subunit RuvB.